We begin with the raw amino-acid sequence, 177 residues long: uncharacterized protein (177 aa).

A run of 4 helical transmembrane segments spans residues 20 to 42 (NLVS…LLAL), 62 to 84 (VVLW…VSLS), 94 to 116 (AMSS…GYFI), and 136 to 158 (GLLY…IIVA).

It is found in the cell membrane. This is an uncharacterized protein from Methanocaldococcus jannaschii (strain ATCC 43067 / DSM 2661 / JAL-1 / JCM 10045 / NBRC 100440) (Methanococcus jannaschii).